A 353-amino-acid chain; its full sequence is Quinolinate synthase (353 aa).

Iminosuccinate is bound by residues H47 and S68. C113 is a [4Fe-4S] cluster binding site. Iminosuccinate-binding positions include 139-141 (YAN) and S156. C200 contributes to the [4Fe-4S] cluster binding site. Iminosuccinate-binding positions include 226 to 228 (HPE) and T243. C297 contributes to the [4Fe-4S] cluster binding site.

This sequence belongs to the quinolinate synthase family. Type 1 subfamily. Requires [4Fe-4S] cluster as cofactor.

It is found in the cytoplasm. It carries out the reaction iminosuccinate + dihydroxyacetone phosphate = quinolinate + phosphate + 2 H2O + H(+). Its pathway is cofactor biosynthesis; NAD(+) biosynthesis; quinolinate from iminoaspartate: step 1/1. In terms of biological role, catalyzes the condensation of iminoaspartate with dihydroxyacetone phosphate to form quinolinate. The protein is Quinolinate synthase of Serratia proteamaculans (strain 568).